The chain runs to 165 residues: 16S rRNA aminocarboxypropyltransferase (165 aa).

Residues Thr17, Leu62, Leu83, and Thr102 each coordinate S-adenosyl-L-methionine.

It belongs to the TDD superfamily. TSR3 family.

It is found in the cytoplasm. It carries out the reaction an N(1)-methylpseudouridine in rRNA + S-adenosyl-L-methionine = N(1)-methyl-N(3)-[(3S)-3-amino-3-carboxypropyl]pseudouridine in rRNA + S-methyl-5'-thioadenosine + H(+). Aminocarboxypropyltransferase that catalyzes the aminocarboxypropyl transfer on pseudouridine corresponding to position 914 in M.jannaschii 16S rRNA. It constitutes the last step in biosynthesis of the hypermodified N1-methyl-N3-(3-amino-3-carboxypropyl) pseudouridine (m1acp3-Psi). The chain is 16S rRNA aminocarboxypropyltransferase from Halobacterium salinarum (strain ATCC 700922 / JCM 11081 / NRC-1) (Halobacterium halobium).